A 161-amino-acid chain; its full sequence is MVEQNLEKLQTDLVETEQRLAAIIDSFIELGVYVYDFPGTEDSMQGMVTNMQRNVDRMKQLNQQANDPESQLQNFLVPLDVLQYIEDGRNPDVYTREFVEAIRRSNQYQRAKIHGLNKLRDSLAEKIIDELPELQPHVESIIARTSPQRTDPISPSIVDKP.

The protein belongs to the Mediator complex subunit 10 family. As to quaternary structure, component of the Mediator complex.

It localises to the nucleus. Component of the Mediator complex, a coactivator involved in the regulated transcription of nearly all RNA polymerase II-dependent genes. Mediator functions as a bridge to convey information from gene-specific regulatory proteins to the basal RNA polymerase II transcription machinery. Mediator is recruited to promoters by direct interactions with regulatory proteins and serves as a scaffold for the assembly of a functional preinitiation complex with RNA polymerase II and the general transcription factors. The sequence is that of Mediator of RNA polymerase II transcription subunit 10 (NUT2) from Kluyveromyces lactis (strain ATCC 8585 / CBS 2359 / DSM 70799 / NBRC 1267 / NRRL Y-1140 / WM37) (Yeast).